The primary structure comprises 204 residues: dCTP deaminase, dUMP-forming (204 aa).

Residues 117 to 122, His128, Gly132, Asp135, 143 to 145, Gln163, Tyr177, Lys184, and Gln188 each bind dCTP; these read RSSLGR and TLE. The Proton donor/acceptor role is filled by Glu145.

As to quaternary structure, homotrimer. Two trimers assemble into a hexamer by stacking on top of each other. It depends on Mg(2+) as a cofactor.

It carries out the reaction dCTP + 2 H2O = dUMP + NH4(+) + diphosphate. Its pathway is pyrimidine metabolism; dUMP biosynthesis; dUMP from dCTP: step 1/1. Its activity is regulated as follows. Inhibited by dTTP. In terms of biological role, bifunctional enzyme that catalyzes both the deamination of dCTP to dUTP and the hydrolysis of dUTP to dUMP without releasing the toxic dUTP intermediate. It also acts as a dUTP diphosphatase with a lower affinity for dUTP than for dCTP. This is dCTP deaminase, dUMP-forming from Methanocaldococcus jannaschii (strain ATCC 43067 / DSM 2661 / JAL-1 / JCM 10045 / NBRC 100440) (Methanococcus jannaschii).